The primary structure comprises 558 residues: MAPFRSIYEKDATKKLVVGAALLVLAAFYSYVFLLTLAPVYGSTPSHIFHGYGVGIAGVAGWFSKDIVDRVSGRKAIYAIPVLAFFLPVVQYFVSQQSSALGNPAGPIFTEVLALYPLVLLSVACAGKLVQAGLNLQRHGDLVAEHIPLLGSYVIYSAGEHLIKAFLSRFIGSTVLLSRAGLQILIAIFYAAAVPSKALLLAIPAFLFSVTSNTHLPLGHTTTALNNIIADDGFALVARQDSTTGYISVLDNLEDGFRVMRCDHSLLGGQWIKKRPNYTPPAVKDPIYAVFTMLEAVRLVETAHGIPRADAGSNALVIGLGIGTTPGALISHGIDTTIVEIDPVVHKYALQYFDLPENHTPIIEDARAFVQRSRNAPQPKQYDYIVHDVFTGGAEPVELFTYEFISGLHALLKDDGVIAINYAGDISLYSTALSIRTIKSIFPTCRLFREAAAPEIGPDFTNMVIFCTKSRGAPITFRDPVPEDFLGSRFRSRYLVPKHEVDAAQFDNVGLEDGPQGHGRRVLVDKEVGRLHKYQDRSALEHWGIMRTVLPDRVWEGW.

Over 1 to 15 the chain is Cytoplasmic; it reads MAPFRSIYEKDATKK. Residues 16 to 32 form a helical membrane-spanning segment; that stretch reads LVVGAALLVLAAFYSYV. The Lumenal portion of the chain corresponds to 33-49; sequence FLLTLAPVYGSTPSHIF. A helical membrane pass occupies residues 50–65; that stretch reads HGYGVGIAGVAGWFSK. Over 66–77 the chain is Cytoplasmic; the sequence is DIVDRVSGRKAI. A helical transmembrane segment spans residues 78 to 96; that stretch reads YAIPVLAFFLPVVQYFVSQ. Topologically, residues 97 to 104 are lumenal; sequence QSSALGNP. A helical transmembrane segment spans residues 105-131; sequence AGPIFTEVLALYPLVLLSVACAGKLVQ. At 132–145 the chain is on the cytoplasmic side; it reads AGLNLQRHGDLVAE. Residues 146 to 169 form a helical membrane-spanning segment; that stretch reads HIPLLGSYVIYSAGEHLIKAFLSR. At 170-172 the chain is on the lumenal side; it reads FIG. Residues 173-194 traverse the membrane as a helical segment; it reads STVLLSRAGLQILIAIFYAAAV. The Cytoplasmic portion of the chain corresponds to 195–197; it reads PSK. The helical transmembrane segment at 198–215 threads the bilayer; sequence ALLLAIPAFLFSVTSNTH. Topologically, residues 216–558 are lumenal; it reads LPLGHTTTAL…VLPDRVWEGW (343 aa).

It belongs to the methyltransferase superfamily.

The protein localises to the endoplasmic reticulum membrane. It carries out the reaction L-histidyl-[protein] + S-adenosyl-L-methionine = N(tele)-methyl-L-histidyl-[protein] + S-adenosyl-L-homocysteine + H(+). Functionally, protein-histidine N-methyltransferase that specifically mediates 3-methylhistidine (tele-methylhistidine) methylation at 'His-1', which protects the side-chain from oxidative damage. Methylates lytic polysaccharide monooxygenases (LPMOs) destined for secretion, including AN4702. This is N-terminal histidine N-methyltransferase from Emericella nidulans (strain FGSC A4 / ATCC 38163 / CBS 112.46 / NRRL 194 / M139) (Aspergillus nidulans).